Here is a 305-residue protein sequence, read N- to C-terminus: Major fimbrium anchoring subunit FimB (305 aa).

The N-terminal stretch at 1 to 22 (MNDAKKYIVSVLILLVAGMFGG) is a signal peptide. C23 is lipidated: N-palmitoyl cysteine. C23 carries the S-diacylglycerol cysteine lipid modification.

Belongs to the bacteroidetes fimbrillin superfamily. FimB/Mfa2 family. As to quaternary structure, fimB is not part of the fimbrium itself, but anchors the fimbrium in the outer membrane. Linear, head-to-tail oligomerization of fimbrial subunits mediates assembly of the fimbrium stalk, while the minor components FimC, FimD and FimE probably form the fimbrium tip. The anchoring subunit FimB limits fimbrium length and is important for solid fimbrium attachment to the outer membrane. In its absence, the major fimbriae become very long and are easily detached from the membrane.

The protein localises to the cell outer membrane. Its function is as follows. Anchoring subunit of the major fimbriae. Regulates fimbrial length. These filamentous pili are attached to the cell surface; they mediate biofilm formation, adhesion onto host cells and onto other bacteria that are part of the oral microbiome. Fimbriae of P.gingivalis are major virulence factors. This Porphyromonas gingivalis (Bacteroides gingivalis) protein is Major fimbrium anchoring subunit FimB.